The sequence spans 99 residues: U2-theraphotoxin-Lsp1a (99 aa).

The first 22 residues, 1 to 22 (MNTIQVIIFAVVLVLTVTVGQA), serve as a signal peptide directing secretion. Positions 23–57 (DEDSPEASLLRKLKEAEASLFGQNLEESRNSRQKR) are excised as a propeptide. Disulfide bonds link C58–C73, C65–C78, and C72–C93.

Belongs to the neurotoxin 14 (magi-1) family. 08 (Ltx-4) subfamily. In terms of tissue distribution, expressed by the venom gland.

It localises to the secreted. Its function is as follows. Insecticidal neurotoxin. The sequence is that of U2-theraphotoxin-Lsp1a from Lasiodora sp. (strain IBSP 8539) (Brazilian salmon pink birdeater).